Reading from the N-terminus, the 327-residue chain is Pumilio homolog 18 (327 aa).

In terms of domain architecture, PUM-HD spans 1–324 (MAVADNPFSM…NIANILDSFR (324 aa)). 6 Pumilio repeats span residues 79–114 (SDSDYFMSIVTTKFGSRRVQKLLGKSDDVDAFFCAA), 115–149 (ILRRFLHITTDKYASYVTIRAMVVFDKVMKKALYE), 150–185 (RILYHALDLACDQHGCIALNDIITDADDPYYRDQLL), 186–222 (ELVASNALRLSNDASGNFVVQHVLTLYDSRCIHNIAV), 223–260 (NLYGQCIELSFKKYGSYIVEKLLEVEESMVVVVVELLG), and 261–295 (CDGDRLMRLARNEFGNFVVVKALRFTKMSRMDLFW).

Its subcellular location is the cytoplasm. Its function is as follows. Sequence-specific RNA-binding protein that regulates translation and mRNA stability by binding the 3'-UTR of target mRNAs. This Arabidopsis thaliana (Mouse-ear cress) protein is Pumilio homolog 18 (APUM18).